A 196-amino-acid polypeptide reads, in one-letter code: MEKKTGTTTVGIKVKDGVVLAADTQASLDHMVETLNIKKIIPITDRIAITTAGSVGDVQMLARYLEAEARYYYFTWGRPMTTKAMANLLSNILNENRWFPYLVQIIIGGYVDEPTIANLDPFGGLIFDDYTATGSGTPFAIAVLEEGYREDLTIEEAKELAIRAVRAAGRRDVYTGSKKVQVVTITKDGMKEEFVV.

The propeptide at 1 to 6 is removed in mature form; by autocatalysis; sequence MEKKTG. The Nucleophile role is filled by Thr-7.

This sequence belongs to the peptidase T1B family. As to quaternary structure, the 20S proteasome core is composed of 14 alpha and 14 beta subunits that assemble into four stacked heptameric rings, resulting in a barrel-shaped structure. The two inner rings, each composed of seven catalytic beta subunits, are sandwiched by two outer rings, each composed of seven alpha subunits. The catalytic chamber with the active sites is on the inside of the barrel. Has a gated structure, the ends of the cylinder being occluded by the N-termini of the alpha-subunits. Is capped at one or both ends by the proteasome regulatory ATPase, PAN.

The protein localises to the cytoplasm. It catalyses the reaction Cleavage of peptide bonds with very broad specificity.. With respect to regulation, the formation of the proteasomal ATPase PAN-20S proteasome complex, via the docking of the C-termini of PAN into the intersubunit pockets in the alpha-rings, triggers opening of the gate for substrate entry. Interconversion between the open-gate and close-gate conformations leads to a dynamic regulation of the 20S proteasome proteolysis activity. In terms of biological role, component of the proteasome core, a large protease complex with broad specificity involved in protein degradation. This chain is Proteasome subunit beta 1, found in Pyrococcus furiosus (strain ATCC 43587 / DSM 3638 / JCM 8422 / Vc1).